We begin with the raw amino-acid sequence, 203 residues long: MIAFVSGPVAALAPDSAVVEVGGIGIAVQCTPNTLSGLRMGREAKLATSLVVREDSLTLYGFVDDDERQVFELLQTASGVGPRLAQAMLAVHTPDALRRAVSTGDEKALVAVPGIGKKGAQKLLLELKDRLGEPLGTGGPAIGRAVTTGWREQLHAALIGLGYATREADEAVAAVAPQAEAAGGTPQVGQLLKAALQTLNRTR.

The segment at 1–63 (MIAFVSGPVA…EDSLTLYGFV (63 aa)) is domain I. The interval 64–141 (DDDERQVFEL…GEPLGTGGPA (78 aa)) is domain II. A flexible linker region spans residues 141-145 (AIGRA). The tract at residues 146 to 203 (VTTGWREQLHAALIGLGYATREADEAVAAVAPQAEAAGGTPQVGQLLKAALQTLNRTR) is domain III.

It belongs to the RuvA family. In terms of assembly, homotetramer. Forms an RuvA(8)-RuvB(12)-Holliday junction (HJ) complex. HJ DNA is sandwiched between 2 RuvA tetramers; dsDNA enters through RuvA and exits via RuvB. An RuvB hexamer assembles on each DNA strand where it exits the tetramer. Each RuvB hexamer is contacted by two RuvA subunits (via domain III) on 2 adjacent RuvB subunits; this complex drives branch migration. In the full resolvosome a probable DNA-RuvA(4)-RuvB(12)-RuvC(2) complex forms which resolves the HJ.

Its subcellular location is the cytoplasm. The RuvA-RuvB-RuvC complex processes Holliday junction (HJ) DNA during genetic recombination and DNA repair, while the RuvA-RuvB complex plays an important role in the rescue of blocked DNA replication forks via replication fork reversal (RFR). RuvA specifically binds to HJ cruciform DNA, conferring on it an open structure. The RuvB hexamer acts as an ATP-dependent pump, pulling dsDNA into and through the RuvAB complex. HJ branch migration allows RuvC to scan DNA until it finds its consensus sequence, where it cleaves and resolves the cruciform DNA. This chain is Holliday junction branch migration complex subunit RuvA, found in Streptomyces avermitilis (strain ATCC 31267 / DSM 46492 / JCM 5070 / NBRC 14893 / NCIMB 12804 / NRRL 8165 / MA-4680).